Here is a 205-residue protein sequence, read N- to C-terminus: Glycerol-3-phosphate acyltransferase (205 aa).

Residues 1–3 are Periplasmic-facing; it reads MSA. Residues 4–24 form a helical membrane-spanning segment; sequence IAPGMILIAYLCGSISSAILV. The Cytoplasmic portion of the chain corresponds to 25–52; it reads CRLCGLPDPRTSGSGNPGATNVLRIGGK. The helical transmembrane segment at 53-73 threads the bilayer; sequence GAAVAVLIFDVLKGMLPVWGA. The Periplasmic portion of the chain corresponds to 74 to 80; it reads YELGVSP. A helical transmembrane segment spans residues 81-101; it reads FWLGLIAIAACLGHIWPVFFG. The Cytoplasmic segment spans residues 102-111; sequence FKGGKGVATA. The chain crosses the membrane as a helical span at residues 112–132; sequence FGAIAPIGWDLTGVMAGTWLL. The Periplasmic portion of the chain corresponds to 133–137; the sequence is TVLLS. A helical membrane pass occupies residues 138–158; sequence GYSSLGAIVSALIAPFYVWWF. Topologically, residues 159–205 are cytoplasmic; sequence KPQFTFPVSMLSCLILLRHHDNIQRLWRRQETKIWTKFKRKREKDPE.

Belongs to the PlsY family. In terms of assembly, probably interacts with PlsX.

The protein resides in the cell inner membrane. The catalysed reaction is sn-glycerol 3-phosphate + an acyl-CoA = a 1-acyl-sn-glycero-3-phosphate + CoA. The enzyme catalyses a fatty acyl-[ACP] + sn-glycerol 3-phosphate = a 1-acyl-sn-glycero-3-phosphate + holo-[ACP]. Its pathway is lipid metabolism; phospholipid metabolism. Functionally, catalyzes the transfer of an acyl group from acyl-ACP to glycerol-3-phosphate (G3P) to form lysophosphatidic acid (LPA). This enzyme can also utilize acyl-CoA as fatty acyl donor, but not acyl-PO(4). In Escherichia coli O8 (strain IAI1), this protein is Glycerol-3-phosphate acyltransferase.